A 159-amino-acid chain; its full sequence is Abscisic acid and environmental stress-inducible protein (159 aa).

Repeat copies occupy residues Gly38–Asn49, Gly50–Asn61, Gly63–Asn74, Gly77–Asn88, Gly91–Asn102, and Gly105–Asn116. The 7 X 12 AA repeats of G-G-G-Y-N-H-G-G-G-Y-N stretch occupies residues Gly38 to Gln135. One copy of the 7; approximate repeat lies at Gly124 to Gln135.

The protein belongs to the GRP family.

This chain is Abscisic acid and environmental stress-inducible protein, found in Medicago sativa subsp. falcata (Sickle medic).